Here is a 321-residue protein sequence, read N- to C-terminus: Lipoyl synthase (321 aa).

7 residues coordinate [4Fe-4S] cluster: cysteine 68, cysteine 73, cysteine 79, cysteine 94, cysteine 98, cysteine 101, and serine 308. One can recognise a Radical SAM core domain in the interval 80–297; that stretch reads FNHGTATFMI…KAEAMAMGFT (218 aa).

The protein belongs to the radical SAM superfamily. Lipoyl synthase family. Requires [4Fe-4S] cluster as cofactor.

It is found in the cytoplasm. It catalyses the reaction [[Fe-S] cluster scaffold protein carrying a second [4Fe-4S](2+) cluster] + N(6)-octanoyl-L-lysyl-[protein] + 2 oxidized [2Fe-2S]-[ferredoxin] + 2 S-adenosyl-L-methionine + 4 H(+) = [[Fe-S] cluster scaffold protein] + N(6)-[(R)-dihydrolipoyl]-L-lysyl-[protein] + 4 Fe(3+) + 2 hydrogen sulfide + 2 5'-deoxyadenosine + 2 L-methionine + 2 reduced [2Fe-2S]-[ferredoxin]. It functions in the pathway protein modification; protein lipoylation via endogenous pathway; protein N(6)-(lipoyl)lysine from octanoyl-[acyl-carrier-protein]: step 2/2. In terms of biological role, catalyzes the radical-mediated insertion of two sulfur atoms into the C-6 and C-8 positions of the octanoyl moiety bound to the lipoyl domains of lipoate-dependent enzymes, thereby converting the octanoylated domains into lipoylated derivatives. The protein is Lipoyl synthase of Klebsiella pneumoniae (strain 342).